A 354-amino-acid chain; its full sequence is Probable L-ascorbate-6-phosphate lactonase UlaG (354 aa).

Belongs to the UlaG family. A divalent metal cation is required as a cofactor.

Its subcellular location is the cytoplasm. It catalyses the reaction L-ascorbate 6-phosphate + H2O = 3-dehydro-L-gulonate 6-phosphate. Its pathway is cofactor degradation; L-ascorbate degradation; D-xylulose 5-phosphate from L-ascorbate: step 1/4. Its function is as follows. Probably catalyzes the hydrolysis of L-ascorbate-6-P into 3-keto-L-gulonate-6-P. Is essential for L-ascorbate utilization under anaerobic conditions. The sequence is that of Probable L-ascorbate-6-phosphate lactonase UlaG from Escherichia coli O45:K1 (strain S88 / ExPEC).